The chain runs to 331 residues: L-lactate dehydrogenase A chain (331 aa).

NAD(+) contacts are provided by residues 29 to 57 and Arg-98; that span reads GMVG…MEDK. Substrate contacts are provided by Arg-105, Asn-137, and Arg-168. Asn-137 contacts NAD(+). His-192 functions as the Proton acceptor in the catalytic mechanism. Thr-247 is a substrate binding site.

The protein belongs to the LDH/MDH superfamily. LDH family. In terms of assembly, homotetramer.

It localises to the cytoplasm. It carries out the reaction (S)-lactate + NAD(+) = pyruvate + NADH + H(+). It participates in fermentation; pyruvate fermentation to lactate; (S)-lactate from pyruvate: step 1/1. In terms of biological role, interconverts simultaneously and stereospecifically pyruvate and lactate with concomitant interconversion of NADH and NAD(+). The chain is L-lactate dehydrogenase A chain (ldha) from Notothenia angustata (Rockcod).